Reading from the N-terminus, the 389-residue chain is Shewanella-like protein phosphatase 1 (389 aa).

A chloroplast-targeting transit peptide spans Met1–Ser53. The Mn(2+) site is built by Asp64, His66, Asp102, and Asn137. His138 functions as the Proton donor in the catalytic mechanism. Mn(2+) is bound by residues His242 and His314.

Belongs to the metallophosphoesterase superfamily. SLP family. Mn(2+) serves as cofactor. Expressed in rosettes leaves, shoots and flowers (at protein level).

It is found in the plastid. The protein resides in the chloroplast. Functionally, shows phosphatase activity, hydrolyzing the artificial substrate para-nitrophenylphosphate (pNPP) in vitro. The polypeptide is Shewanella-like protein phosphatase 1 (Arabidopsis thaliana (Mouse-ear cress)).